A 1378-amino-acid polypeptide reads, in one-letter code: DNA-directed RNA polymerase subunit beta (1378 aa).

It belongs to the RNA polymerase beta chain family. As to quaternary structure, the RNAP catalytic core consists of 2 alpha, 1 beta, 1 beta' and 1 omega subunit. When a sigma factor is associated with the core the holoenzyme is formed, which can initiate transcription.

It carries out the reaction RNA(n) + a ribonucleoside 5'-triphosphate = RNA(n+1) + diphosphate. In terms of biological role, DNA-dependent RNA polymerase catalyzes the transcription of DNA into RNA using the four ribonucleoside triphosphates as substrates. The polypeptide is DNA-directed RNA polymerase subunit beta (Campylobacter jejuni subsp. jejuni serotype O:23/36 (strain 81-176)).